The following is a 228-amino-acid chain: MLEELKQAVLEANLQLPQYRLVTFTWGNVSGIDRERGLVVIKPSGVAYDKLTIDDMVVVDLTGNVVEGDLKPSSDTPTHLWLYKQFPGIGGIVHTHSTWATVWAQAGKGIPALGTTHADYFYGEIPCTRPMTNEEIQGAYELETGKVITETFRFLDPLQMPGVLVHGHGPFAWGKDPANAVHNAVVLEEVAKMAARTYMLNPNAKPISQTLLDRHYLRKHGANAYYGQ.

Residues 27-28 (GN), 44-45 (SG), and 73-74 (SS) contribute to the substrate site. 3 residues coordinate Zn(2+): Asp-75, His-94, and His-96. Asp-119 functions as the Proton donor/acceptor in the catalytic mechanism. His-168 is a binding site for Zn(2+). Catalysis depends on Tyr-226, which acts as the Proton donor/acceptor.

This sequence belongs to the aldolase class II family. AraD/FucA subfamily. Requires Zn(2+) as cofactor.

The enzyme catalyses L-ribulose 5-phosphate = D-xylulose 5-phosphate. The protein operates within carbohydrate degradation; L-arabinose degradation via L-ribulose; D-xylulose 5-phosphate from L-arabinose (bacterial route): step 3/3. Its function is as follows. Involved in the degradation of L-arabinose. Catalyzes the interconversion of L-ribulose 5-phosphate (LRu5P) and D-xylulose 5-phosphate (D-Xu5P) via a retroaldol/aldol mechanism (carbon-carbon bond cleavage analogous to a class II aldolase reaction). In Geobacillus stearothermophilus (Bacillus stearothermophilus), this protein is L-ribulose-5-phosphate 4-epimerase (araD).